We begin with the raw amino-acid sequence, 207 residues long: MVAQAAPPAGTAGQGTHEAASAAHGAAAAHGAAEEGHGKKSHFPPFDATTFASQLLWLVLSFGLLYLLMSRVALPRIGRILEERHDRIADDLEEAAKHKAESEAAQASYEKALAEARAKANAIAGETRNRLAADSEANRKSLEAGLAVKLATAEQSIASTKTEALTHVRGIAVDATHAIVSTLIGSSPAQSDVEKAVDVALVKKDAA.

Positions 1–31 (MVAQAAPPAGTAGQGTHEAASAAHGAAAAHG) are enriched in low complexity. Residues 1-41 (MVAQAAPPAGTAGQGTHEAASAAHGAAAAHGAAEEGHGKKS) form a disordered region. The helical transmembrane segment at 48–70 (ATTFASQLLWLVLSFGLLYLLMS) threads the bilayer.

It belongs to the ATPase B chain family. F-type ATPases have 2 components, F(1) - the catalytic core - and F(0) - the membrane proton channel. F(1) has five subunits: alpha(3), beta(3), gamma(1), delta(1), epsilon(1). F(0) has three main subunits: a(1), b(2) and c(10-14). The alpha and beta chains form an alternating ring which encloses part of the gamma chain. F(1) is attached to F(0) by a central stalk formed by the gamma and epsilon chains, while a peripheral stalk is formed by the delta and b chains.

Its subcellular location is the cell inner membrane. Functionally, f(1)F(0) ATP synthase produces ATP from ADP in the presence of a proton or sodium gradient. F-type ATPases consist of two structural domains, F(1) containing the extramembraneous catalytic core and F(0) containing the membrane proton channel, linked together by a central stalk and a peripheral stalk. During catalysis, ATP synthesis in the catalytic domain of F(1) is coupled via a rotary mechanism of the central stalk subunits to proton translocation. Its function is as follows. Component of the F(0) channel, it forms part of the peripheral stalk, linking F(1) to F(0). This Xanthobacter autotrophicus (strain ATCC BAA-1158 / Py2) protein is ATP synthase subunit b 2.